The following is a 197-amino-acid chain: Outer-membrane lipoprotein LolB (197 aa).

Positions 1 to 20 (MNRSRRLALFCLGAPLLLQA) are cleaved as a signal peptide. A lipid anchor (N-palmitoyl cysteine) is attached at cysteine 21. The S-diacylglycerol cysteine moiety is linked to residue cysteine 21.

It belongs to the LolB family. As to quaternary structure, monomer.

The protein resides in the cell outer membrane. In terms of biological role, plays a critical role in the incorporation of lipoproteins in the outer membrane after they are released by the LolA protein. This is Outer-membrane lipoprotein LolB from Cupriavidus necator (strain ATCC 17699 / DSM 428 / KCTC 22496 / NCIMB 10442 / H16 / Stanier 337) (Ralstonia eutropha).